A 284-amino-acid chain; its full sequence is Bifunctional protein FolD (284 aa).

Residues 166-168 (GAS) and I232 contribute to the NADP(+) site.

This sequence belongs to the tetrahydrofolate dehydrogenase/cyclohydrolase family. Homodimer.

The enzyme catalyses (6R)-5,10-methylene-5,6,7,8-tetrahydrofolate + NADP(+) = (6R)-5,10-methenyltetrahydrofolate + NADPH. It catalyses the reaction (6R)-5,10-methenyltetrahydrofolate + H2O = (6R)-10-formyltetrahydrofolate + H(+). The protein operates within one-carbon metabolism; tetrahydrofolate interconversion. Its function is as follows. Catalyzes the oxidation of 5,10-methylenetetrahydrofolate to 5,10-methenyltetrahydrofolate and then the hydrolysis of 5,10-methenyltetrahydrofolate to 10-formyltetrahydrofolate. The chain is Bifunctional protein FolD from Shewanella oneidensis (strain ATCC 700550 / JCM 31522 / CIP 106686 / LMG 19005 / NCIMB 14063 / MR-1).